Consider the following 348-residue polypeptide: tRNA pseudouridine synthase D (348 aa).

Substrate is bound at residue F27. Residue D80 is the Nucleophile of the active site. Substrate is bound at residue N129. Positions 155-303 (GVPNYFGSQR…VESARRAVLL (149 aa)) constitute a TRUD domain. F329 provides a ligand contact to substrate.

Belongs to the pseudouridine synthase TruD family.

The catalysed reaction is uridine(13) in tRNA = pseudouridine(13) in tRNA. Functionally, responsible for synthesis of pseudouridine from uracil-13 in transfer RNAs. The sequence is that of tRNA pseudouridine synthase D from Pectobacterium carotovorum subsp. carotovorum (strain PC1).